We begin with the raw amino-acid sequence, 307 residues long: HPr kinase/phosphorylase (307 aa).

Active-site residues include histidine 136 and lysine 157. 151 to 158 (GESGIGKS) contacts ATP. Serine 158 contributes to the Mg(2+) binding site. Aspartate 175 functions as the Proton acceptor; for phosphorylation activity. Proton donor; for dephosphorylation activity in the catalytic mechanism. Positions 198–207 (LEVRGMGIID) are important for the catalytic mechanism of both phosphorylation and dephosphorylation. Glutamate 199 is a Mg(2+) binding site. Arginine 240 is an active-site residue. The tract at residues 261–266 (PIRPGR) is important for the catalytic mechanism of dephosphorylation.

The protein belongs to the HPrK/P family. In terms of assembly, homohexamer. Mg(2+) is required as a cofactor.

The enzyme catalyses [HPr protein]-L-serine + ATP = [HPr protein]-O-phospho-L-serine + ADP + H(+). It catalyses the reaction [HPr protein]-O-phospho-L-serine + phosphate + H(+) = [HPr protein]-L-serine + diphosphate. Catalyzes the ATP- as well as the pyrophosphate-dependent phosphorylation of a specific serine residue in HPr, a phosphocarrier protein of the phosphoenolpyruvate-dependent sugar phosphotransferase system (PTS). HprK/P also catalyzes the pyrophosphate-producing, inorganic phosphate-dependent dephosphorylation (phosphorolysis) of seryl-phosphorylated HPr (P-Ser-HPr). The two antagonistic activities of HprK/P are regulated by several intracellular metabolites, which change their concentration in response to the absence or presence of rapidly metabolisable carbon sources (glucose, fructose, etc.) in the growth medium. Therefore, by controlling the phosphorylation state of HPr, HPrK/P is a sensor enzyme that plays a major role in the regulation of carbon metabolism and sugar transport: it mediates carbon catabolite repression (CCR), and regulates PTS-catalyzed carbohydrate uptake and inducer exclusion. The polypeptide is HPr kinase/phosphorylase (Clostridium novyi (strain NT)).